The chain runs to 416 residues: UDP-N-acetylmuramoylalanine--D-glutamate ligase (416 aa).

108-114 (GTVGKTT) contacts ATP.

Belongs to the MurCDEF family.

Its subcellular location is the cytoplasm. The catalysed reaction is UDP-N-acetyl-alpha-D-muramoyl-L-alanine + D-glutamate + ATP = UDP-N-acetyl-alpha-D-muramoyl-L-alanyl-D-glutamate + ADP + phosphate + H(+). It functions in the pathway cell wall biogenesis; peptidoglycan biosynthesis. In terms of biological role, cell wall formation. Catalyzes the addition of glutamate to the nucleotide precursor UDP-N-acetylmuramoyl-L-alanine (UMA). In Chlamydia muridarum (strain MoPn / Nigg), this protein is UDP-N-acetylmuramoylalanine--D-glutamate ligase.